The sequence spans 243 residues: Phosphoribosylaminoimidazole-succinocarboxamide synthase (243 aa).

The protein belongs to the SAICAR synthetase family.

The enzyme catalyses 5-amino-1-(5-phospho-D-ribosyl)imidazole-4-carboxylate + L-aspartate + ATP = (2S)-2-[5-amino-1-(5-phospho-beta-D-ribosyl)imidazole-4-carboxamido]succinate + ADP + phosphate + 2 H(+). It participates in purine metabolism; IMP biosynthesis via de novo pathway; 5-amino-1-(5-phospho-D-ribosyl)imidazole-4-carboxamide from 5-amino-1-(5-phospho-D-ribosyl)imidazole-4-carboxylate: step 1/2. The sequence is that of Phosphoribosylaminoimidazole-succinocarboxamide synthase from Prochlorococcus marinus (strain MIT 9211).